An 81-amino-acid chain; its full sequence is uncharacterized protein (81 aa).

Residues 1–16 (MNRLTFYGLCLSGAVG) form the signal peptide. A disordered region spans residues 55–81 (TIDPHHNHHDDHHDSHGHGHGKIKGHH). Positions 57–71 (DPHHNHHDDHHDSHG) are enriched in basic and acidic residues. Residues 72-81 (HGHGKIKGHH) are compositionally biased toward basic residues.

It is found in the secreted. This is an uncharacterized protein from Dictyostelium discoideum (Social amoeba).